Here is a 229-residue protein sequence, read N- to C-terminus: Aldehyde oxidoreductase iron-sulfur-binding subunit PaoA (229 aa).

The interval 1–21 (MSNQGEYPEDNRVGKHEPHDL) is disordered. Residues 1–53 (MSNQGEYPEDNRVGKHEPHDLSLTRRDLIKVSAATAATAVVYPHSTLAASVPA) constitute a signal peptide (tat-type signal). Residues 9 to 21 (EDNRVGKHEPHDL) show a composition bias toward basic and acidic residues. In terms of domain architecture, 2Fe-2S ferredoxin-type spans 61 to 137 (MPLTLKVNGK…GAEITTIEGL (77 aa)). Residues cysteine 99, cysteine 104, glycine 105, cysteine 107, cysteine 119, cysteine 158, cysteine 161, cysteine 208, and cysteine 210 each contribute to the [2Fe-2S] cluster site.

Heterotrimer composed of PaoA, PaoB and PaoC. It depends on [2Fe-2S] cluster as a cofactor. Exported by the Tat system. The position of the signal peptide cleavage has not been experimentally proven.

Its subcellular location is the periplasm. It catalyses the reaction an aldehyde + A + H2O = a carboxylate + AH2 + H(+). With respect to regulation, the complex requires PaoD for activity. Functionally, oxidizes aldehydes to the corresponding carboxylic acids with a preference for aromatic aldehydes. It might play a role in the detoxification of aldehydes to avoid cell damage. This chain is Aldehyde oxidoreductase iron-sulfur-binding subunit PaoA, found in Escherichia coli (strain K12).